Here is a 679-residue protein sequence, read N- to C-terminus: Methionine--tRNA ligase (679 aa).

Positions 15–25 (PYANGPIHLGH) match the 'HIGH' region motif. Zn(2+) contacts are provided by C146, C149, C159, and C162. The short motif at 332–336 (KMSKS) is the 'KMSKS' region element. K335 is an ATP binding site. Positions 578–679 (DFAKIDLRIA…EGAQPGMKVK (102 aa)) constitute a tRNA-binding domain.

The protein belongs to the class-I aminoacyl-tRNA synthetase family. MetG type 1 subfamily. In terms of assembly, homodimer. Requires Zn(2+) as cofactor.

It is found in the cytoplasm. It catalyses the reaction tRNA(Met) + L-methionine + ATP = L-methionyl-tRNA(Met) + AMP + diphosphate. Functionally, is required not only for elongation of protein synthesis but also for the initiation of all mRNA translation through initiator tRNA(fMet) aminoacylation. This Shewanella pealeana (strain ATCC 700345 / ANG-SQ1) protein is Methionine--tRNA ligase.